The primary structure comprises 360 residues: Phenylalanine--tRNA ligase alpha subunit (360 aa).

Position 260 (Glu260) interacts with Mg(2+).

This sequence belongs to the class-II aminoacyl-tRNA synthetase family. Phe-tRNA synthetase alpha subunit type 1 subfamily. In terms of assembly, tetramer of two alpha and two beta subunits. The cofactor is Mg(2+).

It is found in the cytoplasm. It carries out the reaction tRNA(Phe) + L-phenylalanine + ATP = L-phenylalanyl-tRNA(Phe) + AMP + diphosphate + H(+). This Methylobacterium radiotolerans (strain ATCC 27329 / DSM 1819 / JCM 2831 / NBRC 15690 / NCIMB 10815 / 0-1) protein is Phenylalanine--tRNA ligase alpha subunit.